The following is a 231-amino-acid chain: LexA repressor (231 aa).

A DNA-binding region (H-T-H motif) is located at residues 26 to 46 (FEEMKEALDLKSKSGIHRLIG). Active-site for autocatalytic cleavage activity residues include serine 152 and lysine 190.

The protein belongs to the peptidase S24 family. In terms of assembly, homodimer.

It carries out the reaction Hydrolysis of Ala-|-Gly bond in repressor LexA.. Its function is as follows. Represses a number of genes involved in the response to DNA damage (SOS response), including recA and lexA. In the presence of single-stranded DNA, RecA interacts with LexA causing an autocatalytic cleavage which disrupts the DNA-binding part of LexA, leading to derepression of the SOS regulon and eventually DNA repair. This Acidiphilium cryptum (strain JF-5) protein is LexA repressor.